A 310-amino-acid chain; its full sequence is GMP synthase [glutamine-hydrolyzing] subunit B (310 aa).

One can recognise a GMPS ATP-PPase domain in the interval phenylalanine 2 to arginine 185. Residue serine 29–alanine 35 coordinates ATP.

Heterodimer composed of a glutamine amidotransferase subunit (A) and a GMP-binding subunit (B).

The catalysed reaction is XMP + L-glutamine + ATP + H2O = GMP + L-glutamate + AMP + diphosphate + 2 H(+). It participates in purine metabolism; GMP biosynthesis; GMP from XMP (L-Gln route): step 1/1. Its function is as follows. Catalyzes the synthesis of GMP from XMP. This is GMP synthase [glutamine-hydrolyzing] subunit B from Methanococcus maripaludis (strain DSM 14266 / JCM 13030 / NBRC 101832 / S2 / LL).